The following is a 387-amino-acid chain: Testis-expressed protein 9 (387 aa).

2 disordered regions span residues 1-25 and 58-133; these read MAGR…LAAG and REQQ…LKYP. Composition is skewed to polar residues over residues 70–91 and 103–115; these read ALTT…SSEG and KNTG…QNRL. Residues 184 to 347 are a coiled coil; the sequence is IGTEAQIRFL…ERQKGELMIG (164 aa).

In terms of tissue distribution, testis-specific.

The protein resides in the cytoplasm. The protein localises to the cytoskeleton. Its subcellular location is the microtubule organizing center. It localises to the centrosome. It is found in the centriolar satellite. In Mus musculus (Mouse), this protein is Testis-expressed protein 9 (Tex9).